The sequence spans 47 residues: uncharacterized protein (47 aa).

Residues 28-45 (VMIWGCLPYFLYVLIRMF) traverse the membrane as a helical segment.

It localises to the cell membrane. This is an uncharacterized protein from Bacillus subtilis (strain 168).